A 691-amino-acid chain; its full sequence is MAHTFLLEIGLEEMPAHVVTPAIKQLVKRTADYLKEERVDYDEIKPFSTPRRLAVLITGLADKQRDISESVKGPAKKIAQDAEGNWSKAAIGFTRGQGLTTDDITFKEIKGTEYVYVDKFIAGEPVATVLAGLKDVITAMTFPTMMKWSTHHFQYIRPIRWLVALLDADVIPFSILDVTTDRNTRGHRFLGKDISIATAADYEGDLTSEFVIADADKRKSMIKTQIDKLAADHGWTVNVDAGLLEEVNNLVEWPTAFAGSFDEKYLTIPEEVLITSMRDHQRFFYARDAQGQLLPTFISVRNGNDHDLQNVVSGNEKVLTARLEDAMFFYTEDQKKTIADYVERLKTVSFHDKISTMAEKMSRVKAIAGVLAKHVGLNDAQTKAVLRASEIYKFDLVTGMVGEFAELQGVMGEKYALLQGEDPAVAQAIREHYEPISADGALPASVPGAVLALADKFDSILTFFAAGMIPSGSNDPYALRRQATGIVRIAQDQQWSLPVADLAQAFVAAETTANVAPKLDQAGQIDALVNFIKDRIRKILRSAKQRHDIIDAVTAGSSSDVLQIFTAADILASHADDANFKDVIESLTRVIRLAQKAPAEVAATTVDPALFENDSEGQLHQGVATVATAAKDGLTALYTALADIQPVIAAYFDATMVMAKDDAVRNNRLAELSRLADLALALGDLDQLVVK.

This sequence belongs to the class-II aminoacyl-tRNA synthetase family. Tetramer of two alpha and two beta subunits.

The protein localises to the cytoplasm. The enzyme catalyses tRNA(Gly) + glycine + ATP = glycyl-tRNA(Gly) + AMP + diphosphate. In Levilactobacillus brevis (strain ATCC 367 / BCRC 12310 / CIP 105137 / JCM 1170 / LMG 11437 / NCIMB 947 / NCTC 947) (Lactobacillus brevis), this protein is Glycine--tRNA ligase beta subunit.